We begin with the raw amino-acid sequence, 160 residues long: Thialysine N-epsilon-acetyltransferase (160 aa).

In terms of domain architecture, N-acetyltransferase spans 4 to 159 (FEIVTVTPDH…DGAAINKFAD (156 aa)). Acetyl-CoA is bound by residues 84 to 86 (LYI), 92 to 97 (RMGLAR), 123 to 126 (NKNA), and 130 to 133 (YDTV).

It belongs to the acetyltransferase family. As to quaternary structure, homodimer.

The catalysed reaction is S-(2-aminoethyl)-L-cysteine + acetyl-CoA = S-(2-acetamidoethyl)-L-cysteine + CoA + H(+). It catalyses the reaction O-(2-aminoethyl)-L-serine + acetyl-CoA = O-(2-acetamidoethyl)-L-serine + CoA + H(+). It carries out the reaction S-(2-aminoethyl)-homocysteine + acetyl-CoA = S-(2-acetamidoethyl)-homocysteine + CoA + H(+). In terms of biological role, catalyzes the N-acetylation of the amino acid thialysine (S-(2-aminoethyl)-L-cysteine), a L-lysine analog with the 4-methylene group substituted with a sulfur. Substrate specificity: thialysine &gt; O-(2-aminoethyl)-L-serine &gt; S-(2-aminoethyl)-D,L-homocysteine. Does not act on polyamines, such as spermidine and spermine, nor on diamines putrescine and cadaverine. In Caenorhabditis elegans, this protein is Thialysine N-epsilon-acetyltransferase.